Reading from the N-terminus, the 174-residue chain is Probable calcium-binding protein CML20 (174 aa).

Residue Gly-2 is the site of N-myristoyl glycine attachment. Residues 14–35 (LRRSRSRSPPPAVLDPSQSPLS) are disordered. 4 EF-hand domains span residues 39-74 (EAEP…SVDE), 75-100 (AEEM…AVME), 102-137 (GGLD…LNLD), and 141-174 (LTAE…SKQA). Ca(2+) contacts are provided by Asp-52, Asp-54, Asp-56, Glu-63, Asp-83, Asp-85, Asp-87, Glu-94, Asp-115, Asp-117, Asn-119, Glu-126, Asp-154, Asp-156, Asp-158, and Glu-165.

Its function is as follows. Potential calcium sensor. The polypeptide is Probable calcium-binding protein CML20 (CML20) (Oryza sativa subsp. japonica (Rice)).